Consider the following 446-residue polypeptide: uncharacterized protein (446 aa).

A run of 12 helical transmembrane segments spans residues 20–40 (LIGV…IAIV), 42–62 (SGFS…FVFE), 95–115 (WVYW…ISLF), 127–147 (VFAS…LSVF), 160–180 (AAIF…LSGG), 205–225 (LIYA…AVHL), 237–257 (LMLA…LLLV), 284–304 (IFNG…LFAV), 331–351 (WPAL…SLVL), 355–375 (IYEH…LFIL), 388–408 (GKTQ…GTLF), and 414–434 (PGFF…MIYQ).

It belongs to the amino acid-polyamine-organocation (APC) superfamily.

The protein resides in the cell membrane. This is an uncharacterized protein from Bacillus subtilis (strain 168).